We begin with the raw amino-acid sequence, 195 residues long: Probable GTP-binding protein EngB (195 aa).

One can recognise an EngB-type G domain in the interval 22–195; that stretch reads GRPEVALAGR…WAALLPFLTE (174 aa). GTP contacts are provided by residues 30-37, 57-61, 75-78, 142-145, and 174-176; these read GRSNVGKS, GKTQT, DVPG, TKAD, and FSS. The Mg(2+) site is built by serine 37 and threonine 59.

The protein belongs to the TRAFAC class TrmE-Era-EngA-EngB-Septin-like GTPase superfamily. EngB GTPase family. Mg(2+) is required as a cofactor.

Its function is as follows. Necessary for normal cell division and for the maintenance of normal septation. In Geobacillus thermodenitrificans (strain NG80-2), this protein is Probable GTP-binding protein EngB.